A 274-amino-acid polypeptide reads, in one-letter code: MNEHEFAQKTIAIRRKVREQRPLVHHITNFVVMNITANVTLAVGASPVMAHAHEEVKEMAAFAGALNLNIGTLTPYWIDAMVMAGKVAEQRGIPIVLDPVGSGATPLRTGAAKKILAEVGVNVIRGNASEVMSLFADKETVNIRGVDSLETVDAVRHEAGLLAGELEKVVAVTGPVDIVTDGTRTLEVHNGTPMFGRVTGTGCSATTVISCFCAVEPDLLVASAAALGYYGLAGEEAARISNGPGSFQAALLDTLYNLPEKIIQEKLRIREVLP.

M49 contacts substrate. Positions 125 and 173 each coordinate ATP. G200 serves as a coordination point for substrate.

Belongs to the Thz kinase family. The cofactor is Mg(2+).

It carries out the reaction 5-(2-hydroxyethyl)-4-methylthiazole + ATP = 4-methyl-5-(2-phosphooxyethyl)-thiazole + ADP + H(+). It functions in the pathway cofactor biosynthesis; thiamine diphosphate biosynthesis; 4-methyl-5-(2-phosphoethyl)-thiazole from 5-(2-hydroxyethyl)-4-methylthiazole: step 1/1. Functionally, catalyzes the phosphorylation of the hydroxyl group of 4-methyl-5-beta-hydroxyethylthiazole (THZ). This is Hydroxyethylthiazole kinase from Desulfosudis oleivorans (strain DSM 6200 / JCM 39069 / Hxd3) (Desulfococcus oleovorans).